A 414-amino-acid polypeptide reads, in one-letter code: Peptidoglycan beta-N-acetylmuramidase NamZ (414 aa).

The signal sequence occupies residues 1-23; sequence MRKTIFAFLTGLMMFGTITAASA.

This sequence belongs to the glycoside hydrolase 171 family. Homodimer in solution.

The protein resides in the secreted. It catalyses the reaction Hydrolysis of terminal, non-reducing N-acetylmuramic residues.. Functionally, catalyzes the exo-lytic cleavage of beta-1,4-N-acetylmuramate (beta-1,4-MurNAc) from the non-reducing ends of peptidoglycan chains. Specifically hydrolyzes the natural, peptidoglycan-derived disaccharide MurNAc-GlcNAc and the artificial substrate para-nitrophenyl beta-N-acetylmuramic acid (pNP-MurNAc). Requires a MurNAc entity at the non-reducing end, and cannot cleave GlcNAc-MurNAc. Probably plays a role in cell wall turnover and recycling. This chain is Peptidoglycan beta-N-acetylmuramidase NamZ, found in Bacillus subtilis (strain 168).